Reading from the N-terminus, the 215-residue chain is Eukaryotic translation initiation factor 4E-1A (215 aa).

A compositionally biased stretch (low complexity) spans 1-14 (MATAEPETSTNPSN). Positions 1–23 (MATAEPETSTNPSNSEEKNEENE) are disordered. MRNA is bound by residues 54–55 (WQ), 100–101 (WE), 155–160 (RTKGDK), and 203–205 (TKS).

It belongs to the eukaryotic initiation factor 4E family. In terms of assembly, interacts with eif4ebp3l. In terms of tissue distribution, expressed in all tissues examined, including gill, fin, heart, intestine, muscle, ovary and testis.

It is found in the cytoplasm. It localises to the nucleus. Functionally, recognizes and binds the 7-methylguanosine (m7G)-containing mRNA cap during an early step in the initiation of protein synthesis and facilitates ribosome binding by inducing the unwinding of the mRNAs secondary structures. Also promotes export of a subset of mRNAs from the nucleus to the cytoplasm. The protein is Eukaryotic translation initiation factor 4E-1A of Danio rerio (Zebrafish).